A 952-amino-acid chain; its full sequence is UvrABC system protein A (952 aa).

Residue 31–38 (GVSGSGKS) coordinates ATP. The C4-type zinc-finger motif lies at 253–280 (CPEHGSVLEELEPRIFSFNSPYGACPAC). 2 consecutive ABC transporter domains span residues 309 to 591 (WSRG…PQSL) and 611 to 938 (GNGK…AFLA). 643-650 (GPSGSGKS) contributes to the ATP binding site. A C4-type zinc finger spans residues 742–768 (CEACGGDGTVKIEMLFLPDLYVPCEVC).

This sequence belongs to the ABC transporter superfamily. UvrA family. As to quaternary structure, forms a heterotetramer with UvrB during the search for lesions.

The protein resides in the cytoplasm. The UvrABC repair system catalyzes the recognition and processing of DNA lesions. UvrA is an ATPase and a DNA-binding protein. A damage recognition complex composed of 2 UvrA and 2 UvrB subunits scans DNA for abnormalities. When the presence of a lesion has been verified by UvrB, the UvrA molecules dissociate. The chain is UvrABC system protein A from Thermus thermophilus (strain ATCC 27634 / DSM 579 / HB8).